A 153-amino-acid chain; its full sequence is Superoxide dismutase [Cu-Zn] (153 aa).

Residues His-45, His-47, and His-62 each coordinate Cu cation. An intrachain disulfide couples Cys-56 to Cys-145. 4 residues coordinate Zn(2+): His-62, His-70, His-79, and Asp-82. Position 119 (His-119) interacts with Cu cation.

Belongs to the Cu-Zn superoxide dismutase family. Homodimer. Requires Cu cation as cofactor. It depends on Zn(2+) as a cofactor.

The protein resides in the cytoplasm. It catalyses the reaction 2 superoxide + 2 H(+) = H2O2 + O2. In terms of biological role, destroys radicals which are normally produced within the cells and which are toxic to biological systems. This is Superoxide dismutase [Cu-Zn] from Drosophila yakuba (Fruit fly).